Reading from the N-terminus, the 252-residue chain is Flavin-dependent thymidylate synthase (252 aa).

The ThyX domain maps to 7–235 (LDVQLVACST…PTVFSDFETS (229 aa)). Residues 94–97 (ELVR), 105–109 (QLSQR), and Arg174 each bind dUMP. Residues 97–99 (RHR) and Gln105 contribute to the FAD site. The ThyX motif signature appears at 97–107 (RHRHFSFSQLS). FAD contacts are provided by residues 190–192 (NFR) and His196. Residue Arg201 participates in dUMP binding. The active-site Involved in ionization of N3 of dUMP, leading to its activation is the Arg201.

The protein belongs to the thymidylate synthase ThyX family. As to quaternary structure, homotetramer. FAD is required as a cofactor.

The catalysed reaction is dUMP + (6R)-5,10-methylene-5,6,7,8-tetrahydrofolate + NADPH + H(+) = dTMP + (6S)-5,6,7,8-tetrahydrofolate + NADP(+). It participates in pyrimidine metabolism; dTTP biosynthesis. Functionally, catalyzes the reductive methylation of 2'-deoxyuridine-5'-monophosphate (dUMP) to 2'-deoxythymidine-5'-monophosphate (dTMP) while utilizing 5,10-methylenetetrahydrofolate (mTHF) as the methyl donor, and NADPH and FADH(2) as the reductant. In Corynebacterium diphtheriae (strain ATCC 700971 / NCTC 13129 / Biotype gravis), this protein is Flavin-dependent thymidylate synthase.